A 720-amino-acid chain; its full sequence is NAD(P)H-quinone oxidoreductase subunit 5, chloroplastic (720 aa).

Transmembrane regions (helical) follow at residues 9–29 (WIVPFFPFIASILIGVNLLFF), 39–59 (IWAIFSILLLSIAMIFSFNIL), 87–107 (FLIDPLTSIMLVLITTVGVLV), 125–145 (FAYLSLFTASMLGLVLSPNLI), 147–167 (IYIFWELVGMCSYLLIGFWFT), 189–209 (LLLGILGFYWITGSFEFEILF), 221–239 (VNLYFANFCALLLFLGPIA), 258–278 (TPISALIHAATMVAAGIFLVA), 286–306 (LLPFVMTIISWVGAITAFLGA), 327–347 (LGYMMLALGIGSYQAGLFHLI), 354–374 (ALLFLGSGSVIHSVESIVGYS), 395–415 (GITFLLGTFSLCGIPPFACFW), 434–454 (ISLVTAGLTAFYMFRIYFLTF), 530–550 (LFPLLVLTLPTLFIGFLGAPF), 590–610 (LSVVFSGIFIAFILYGPFSLF), and 700–720 (LFGLIFGMIILLFIGFFGAMF).

This sequence belongs to the complex I subunit 5 family. In terms of assembly, NDH is composed of at least 16 different subunits, 5 of which are encoded in the nucleus.

The protein localises to the plastid. It is found in the chloroplast thylakoid membrane. The enzyme catalyses a plastoquinone + NADH + (n+1) H(+)(in) = a plastoquinol + NAD(+) + n H(+)(out). It catalyses the reaction a plastoquinone + NADPH + (n+1) H(+)(in) = a plastoquinol + NADP(+) + n H(+)(out). Its function is as follows. NDH shuttles electrons from NAD(P)H:plastoquinone, via FMN and iron-sulfur (Fe-S) centers, to quinones in the photosynthetic chain and possibly in a chloroplast respiratory chain. The immediate electron acceptor for the enzyme in this species is believed to be plastoquinone. Couples the redox reaction to proton translocation, and thus conserves the redox energy in a proton gradient. In Physcomitrium patens (Spreading-leaved earth moss), this protein is NAD(P)H-quinone oxidoreductase subunit 5, chloroplastic (ndhF).